The following is a 210-amino-acid chain: MAKNKFSKDWIHQHINDPYVKLAQQKGYRARAAFKLLEILDAEKLMRRGDIVVDLGSAPGSWSQVARERLAGPGGAVDGRIIALDLLPMEPVAGVEFIQGDFREEAVLEQLARMVEGQPVDLVISDMAPNLSGVGVADSARIQHVCELALEFACAHLKPNGALIVKAFHGSGFSQIVQSYKQRFKRVVERKPKASRDKSSETFLVARDLK.

Residues Gly-60, Trp-62, Asp-85, Asp-101, and Asp-126 each contribute to the S-adenosyl-L-methionine site. Lys-166 (proton acceptor) is an active-site residue. The segment covering 191–200 (KPKASRDKSS) has biased composition (basic and acidic residues). Residues 191 to 210 (KPKASRDKSSETFLVARDLK) are disordered.

It belongs to the class I-like SAM-binding methyltransferase superfamily. RNA methyltransferase RlmE family.

Its subcellular location is the cytoplasm. The catalysed reaction is uridine(2552) in 23S rRNA + S-adenosyl-L-methionine = 2'-O-methyluridine(2552) in 23S rRNA + S-adenosyl-L-homocysteine + H(+). In terms of biological role, specifically methylates the uridine in position 2552 of 23S rRNA at the 2'-O position of the ribose in the fully assembled 50S ribosomal subunit. This is Ribosomal RNA large subunit methyltransferase E from Bordetella bronchiseptica (strain ATCC BAA-588 / NCTC 13252 / RB50) (Alcaligenes bronchisepticus).